Reading from the N-terminus, the 368-residue chain is tRNA-specific 2-thiouridylase MnmA (368 aa).

Residues 11-18 (GMSGGVDS) and Met37 contribute to the ATP site. The tract at residues 97–99 (NPD) is interaction with target base in tRNA. Cys102 acts as the Nucleophile in catalysis. A disulfide bridge connects residues Cys102 and Cys199. Gly127 provides a ligand contact to ATP. The segment at 149–151 (KDQ) is interaction with tRNA. Catalysis depends on Cys199, which acts as the Cysteine persulfide intermediate. Positions 311–312 (RY) are interaction with tRNA.

The protein belongs to the MnmA/TRMU family. Interacts with TusE.

The protein localises to the cytoplasm. It catalyses the reaction S-sulfanyl-L-cysteinyl-[protein] + uridine(34) in tRNA + AH2 + ATP = 2-thiouridine(34) in tRNA + L-cysteinyl-[protein] + A + AMP + diphosphate + H(+). Functionally, catalyzes the 2-thiolation of uridine at the wobble position (U34) of tRNA(Lys), tRNA(Glu) and tRNA(Gln), leading to the formation of s(2)U34, the first step of tRNA-mnm(5)s(2)U34 synthesis. Sulfur is provided by IscS, via a sulfur-relay system. Binds ATP and its substrate tRNAs. The polypeptide is tRNA-specific 2-thiouridylase MnmA (Escherichia coli O6:H1 (strain CFT073 / ATCC 700928 / UPEC)).